We begin with the raw amino-acid sequence, 362 residues long: Holliday junction branch migration complex subunit RuvB (362 aa).

Positions 1–183 (MADSSLVGGG…FGFTGHLEFY (183 aa)) are large ATPase domain (RuvB-L). ATP is bound by residues Leu22, Arg23, Gly64, Lys67, Thr68, Thr69, 130 to 132 (EDF), Arg173, Tyr183, and Arg220. Residue Thr68 coordinates Mg(2+). The segment at 184–254 (SVEELELVLR…TASAALDMYE (71 aa)) is small ATPAse domain (RuvB-S). A head domain (RuvB-H) region spans residues 257-362 (KRGLDRLDRS…PVAEWLPNGQ (106 aa)). DNA contacts are provided by Arg312 and Arg317.

It belongs to the RuvB family. As to quaternary structure, homohexamer. Forms an RuvA(8)-RuvB(12)-Holliday junction (HJ) complex. HJ DNA is sandwiched between 2 RuvA tetramers; dsDNA enters through RuvA and exits via RuvB. An RuvB hexamer assembles on each DNA strand where it exits the tetramer. Each RuvB hexamer is contacted by two RuvA subunits (via domain III) on 2 adjacent RuvB subunits; this complex drives branch migration. In the full resolvosome a probable DNA-RuvA(4)-RuvB(12)-RuvC(2) complex forms which resolves the HJ.

Its subcellular location is the cytoplasm. The catalysed reaction is ATP + H2O = ADP + phosphate + H(+). In terms of biological role, the RuvA-RuvB-RuvC complex processes Holliday junction (HJ) DNA during genetic recombination and DNA repair, while the RuvA-RuvB complex plays an important role in the rescue of blocked DNA replication forks via replication fork reversal (RFR). RuvA specifically binds to HJ cruciform DNA, conferring on it an open structure. The RuvB hexamer acts as an ATP-dependent pump, pulling dsDNA into and through the RuvAB complex. RuvB forms 2 homohexamers on either side of HJ DNA bound by 1 or 2 RuvA tetramers; 4 subunits per hexamer contact DNA at a time. Coordinated motions by a converter formed by DNA-disengaged RuvB subunits stimulates ATP hydrolysis and nucleotide exchange. Immobilization of the converter enables RuvB to convert the ATP-contained energy into a lever motion, pulling 2 nucleotides of DNA out of the RuvA tetramer per ATP hydrolyzed, thus driving DNA branch migration. The RuvB motors rotate together with the DNA substrate, which together with the progressing nucleotide cycle form the mechanistic basis for DNA recombination by continuous HJ branch migration. Branch migration allows RuvC to scan DNA until it finds its consensus sequence, where it cleaves and resolves cruciform DNA. The polypeptide is Holliday junction branch migration complex subunit RuvB (Arthrobacter sp. (strain FB24)).